A 472-amino-acid chain; its full sequence is Argininosuccinate lyase (472 aa).

This sequence belongs to the lyase 1 family. Argininosuccinate lyase subfamily.

It localises to the cytoplasm. The enzyme catalyses 2-(N(omega)-L-arginino)succinate = fumarate + L-arginine. Its pathway is amino-acid biosynthesis; L-arginine biosynthesis; L-arginine from L-ornithine and carbamoyl phosphate: step 3/3. The sequence is that of Argininosuccinate lyase from Synechococcus sp. (strain CC9311).